A 196-amino-acid polypeptide reads, in one-letter code: Ribosome maturation factor RimP (196 aa).

The disordered stretch occupies residues 164 to 196 (LAPQKPNKPGPKKPGHDKKKPSNEPAAGKPRAE). The span at 173 to 182 (GPKKPGHDKK) shows a compositional bias: basic residues.

This sequence belongs to the RimP family.

It is found in the cytoplasm. Its function is as follows. Required for maturation of 30S ribosomal subunits. This chain is Ribosome maturation factor RimP, found in Xanthomonas campestris pv. campestris (strain 8004).